Reading from the N-terminus, the 508-residue chain is Flavonoid 3'-monooxygenase CYP75B137 (508 aa).

Residues 2–22 (LTFFFLWISTLLLSSFIVYLL) traverse the membrane as a helical segment. Cys-445 is a binding site for heme.

This sequence belongs to the cytochrome P450 family. The cofactor is heme. As to expression, expressed in young cromes.

It localises to the membrane. It carries out the reaction a 3'-unsubstituted flavone + reduced [NADPH--hemoprotein reductase] + O2 = a 3'-hydroxyflavone + oxidized [NADPH--hemoprotein reductase] + H2O + H(+). The enzyme catalyses (2S)-naringenin + reduced [NADPH--hemoprotein reductase] + O2 = (S)-eriodictyol + oxidized [NADPH--hemoprotein reductase] + H2O + H(+). The catalysed reaction is (2R,3R)-dihydrokaempferol + reduced [NADPH--hemoprotein reductase] + O2 = (2R,3R)-dihydroquercetin + oxidized [NADPH--hemoprotein reductase] + H2O + H(+). It catalyses the reaction kaempferol + reduced [NADPH--hemoprotein reductase] + O2 = quercetin + oxidized [NADPH--hemoprotein reductase] + H2O + H(+). It functions in the pathway flavonoid metabolism. Flavonoid 3'-hydroxylase that catalyzes the 3'-hydroxylation of flavanones, dihydroflavonols and flavonols. Converts narigenin to eriodictyol, dihydrokaempferol to dihydroquercetin and kaempferol to quercetin. In Crocosmia x crocosmiiflora (Montbretia), this protein is Flavonoid 3'-monooxygenase CYP75B137.